A 359-amino-acid polypeptide reads, in one-letter code: Double-stranded RNA-binding protein 3 (359 aa).

DRBM domains lie at Met-1–Ser-70 and Ile-87–Lys-155. Residues Glu-266–Ile-280 show a composition bias toward basic and acidic residues. Disordered regions lie at residues Glu-266–Val-292 and Ala-328–Asn-359. Pro residues predominate over residues Ala-328–Asn-338.

In terms of biological role, binds double-stranded RNA. This chain is Double-stranded RNA-binding protein 3 (DRB3), found in Arabidopsis thaliana (Mouse-ear cress).